A 211-amino-acid polypeptide reads, in one-letter code: Protein-L-isoaspartate O-methyltransferase 2 (211 aa).

The active site involves serine 60.

The protein belongs to the methyltransferase superfamily. L-isoaspartyl/D-aspartyl protein methyltransferase family.

It is found in the cytoplasm. The enzyme catalyses [protein]-L-isoaspartate + S-adenosyl-L-methionine = [protein]-L-isoaspartate alpha-methyl ester + S-adenosyl-L-homocysteine. In terms of biological role, catalyzes the methyl esterification of L-isoaspartyl residues in peptides and proteins that result from spontaneous decomposition of normal L-aspartyl and L-asparaginyl residues. It plays a role in the repair and/or degradation of damaged proteins. In Nitrosospira multiformis (strain ATCC 25196 / NCIMB 11849 / C 71), this protein is Protein-L-isoaspartate O-methyltransferase 2.